Consider the following 483-residue polypeptide: Auxin transporter-like protein 2 (483 aa).

At 1–53 (MENGEKAAETVVVGNYVEMEKDGKALDIKSKLSDMFWHGGSAYDAWFSCASNQ) the chain is on the cytoplasmic side. The helical transmembrane segment at 54 to 71 (VAQVLLTLPYSFSQLGML) threads the bilayer. Residues 72 to 73 (SG) lie on the Extracellular side of the membrane. The chain crosses the membrane as a helical span at residues 74–94 (ILFQLFYGILGSWTAYLISIL). Residues 95 to 130 (YVEYRTRKEREKVNFRNHVIQWFEVLDGLLGKHWRN) are Cytoplasmic-facing. Residues 131-151 (VGLAFNCTFLLFGSVIQLIAC) form a helical membrane-spanning segment. At 152 to 166 (ASNIYYINDNLDKRT) the chain is on the extracellular side. The helical transmembrane segment at 167–187 (WTYIFGACCATTVFIPSFHNY) threads the bilayer. At 188–190 (RIW) the chain is on the cytoplasmic side. The helical transmembrane segment at 191-211 (SFLGLLMTTYTAWYLTIASIL) threads the bilayer. Residues 212-226 (HGQVEGVKHSGPSKL) are Extracellular-facing. A helical membrane pass occupies residues 227-247 (VLYFTGATNILYTFGGHAVTV). At 248-261 (EIMHAMWKPQKFKS) the chain is on the cytoplasmic side. A helical transmembrane segment spans residues 262–282 (IYLFATLYVLTLTLPSASAVY). Residues 283–306 (WAFGDLLLNHSNAFALLPKNLYRD) are Extracellular-facing. An N-linked (GlcNAc...) asparagine glycan is attached at Asn291. A helical transmembrane segment spans residues 307 to 327 (FAVVLMLIHQFITFGFACTPL). Over 328-350 (YFVWEKLIGMHECRSMCKRAAAR) the chain is Cytoplasmic. Residues 351-371 (LPVVIPIWFLAIIFPFFGPIN) form a helical membrane-spanning segment. Residues 372–374 (STV) are Extracellular-facing. The helical transmembrane segment at 375–395 (GSLLVSFTVYIIPALAHIFTF) threads the bilayer. Over 396–422 (RSSAARENAVEQPPRFLGRWTGAFTIN) the chain is Cytoplasmic. The chain crosses the membrane as a helical span at residues 423 to 443 (AFIVVWVFIVGFGFGGWASMI). The Extracellular segment spans residues 444–483 (NFVHQIDTFGLFTKCYQCPPPVMVSPPPISHPHFNHTHGL). N-linked (GlcNAc...) asparagine glycosylation occurs at Asn478.

This sequence belongs to the amino acid/polyamine transporter 2 family. Amino acid/auxin permease (AAAP) (TC 2.A.18.1) subfamily.

The protein localises to the cell membrane. Carrier protein involved in proton-driven auxin influx. Mediates the formation of auxin gradient from developing leaves (site of auxin biosynthesis) to tips by contributing to the loading of auxin in vascular tissues and facilitating acropetal (base to tip) auxin transport within inner tissues of the root apex, and basipetal (tip to base) auxin transport within outer tissues of the root apex. The sequence is that of Auxin transporter-like protein 2 (LAX2) from Arabidopsis thaliana (Mouse-ear cress).